Reading from the N-terminus, the 289-residue chain is Oxaloacetate decarboxylase (289 aa).

Ser-50 is a binding site for substrate. Asp-88 contacts Mg(2+). Substrate contacts are provided by Arg-159 and His-235.

Belongs to the isocitrate lyase/PEP mutase superfamily. Oxaloacetate decarboxylase family. In terms of assembly, homotetramer; dimer of dimers. Mg(2+) serves as cofactor.

The catalysed reaction is oxaloacetate + H(+) = pyruvate + CO2. Functionally, catalyzes the decarboxylation of oxaloacetate into pyruvate. Seems to play a role in maintaining cellular concentrations of bicarbonate and pyruvate. This Pseudomonas putida (strain ATCC 47054 / DSM 6125 / CFBP 8728 / NCIMB 11950 / KT2440) protein is Oxaloacetate decarboxylase.